The primary structure comprises 529 residues: Bifunctional purine biosynthesis protein PurH (529 aa).

Residues 3–149 (DRIPLKRALI…KNHAFVTVVV (147 aa)) form the MGS-like domain.

This sequence belongs to the PurH family.

The enzyme catalyses (6R)-10-formyltetrahydrofolate + 5-amino-1-(5-phospho-beta-D-ribosyl)imidazole-4-carboxamide = 5-formamido-1-(5-phospho-D-ribosyl)imidazole-4-carboxamide + (6S)-5,6,7,8-tetrahydrofolate. It carries out the reaction IMP + H2O = 5-formamido-1-(5-phospho-D-ribosyl)imidazole-4-carboxamide. It functions in the pathway purine metabolism; IMP biosynthesis via de novo pathway; 5-formamido-1-(5-phospho-D-ribosyl)imidazole-4-carboxamide from 5-amino-1-(5-phospho-D-ribosyl)imidazole-4-carboxamide (10-formyl THF route): step 1/1. The protein operates within purine metabolism; IMP biosynthesis via de novo pathway; IMP from 5-formamido-1-(5-phospho-D-ribosyl)imidazole-4-carboxamide: step 1/1. This is Bifunctional purine biosynthesis protein PurH from Paracoccus denitrificans (strain Pd 1222).